Here is a 97-residue protein sequence, read N- to C-terminus: RNA-binding protein Hfq (97 aa).

The Sm domain occupies 10–70 (DPFLNALRKE…ISTIVPARSV (61 aa)).

This sequence belongs to the Hfq family. Homohexamer.

Functionally, RNA chaperone that binds small regulatory RNA (sRNAs) and mRNAs to facilitate mRNA translational regulation in response to envelope stress, environmental stress and changes in metabolite concentrations. Also binds with high specificity to tRNAs. The polypeptide is RNA-binding protein Hfq (Neisseria gonorrhoeae (strain ATCC 700825 / FA 1090)).